Reading from the N-terminus, the 458-residue chain is Retinoic acid receptor RXR-beta (458 aa).

The span at 1 to 17 shows a compositional bias: basic and acidic residues; sequence GEAGRDGMGDTGRDSRS. Residues 1–105 form a disordered region; it reads GEAGRDGMGD…GGSGPPEDVK (105 aa). Positions 1–129 are modulating; that stretch reads GEAGRDGMGD…PGGPGAGKRL (129 aa). Positions 18-31 are enriched in low complexity; it reads PDSSSPNPLSQGIP. Residues 32–56 show a composition bias toward pro residues; that stretch reads PSSPPGPPHTPSAPPPPMPPPPLGS. A compositionally biased stretch (low complexity) spans 57–68; the sequence is PFPVISSSMGSP. A compositionally biased stretch (pro residues) spans 69–78; that stretch reads GLPPPAPPGF. 2 NR C4-type zinc fingers span residues 130 to 150 and 166 to 190; these read CAICGDRSSGKHYGVYSCEGC and CRDNKDCTVDKRQRNRCQYCRYQKC. Positions 130–195 form a DNA-binding region, nuclear receptor; the sequence is CAICGDRSSG…RYQKCLATGM (66 aa). The interval 196–220 is hinge; sequence KREAVQEERQRGKDKDGDGDGAGGA. A compositionally biased stretch (basic and acidic residues) spans 201–213; sequence QEERQRGKDKDGD. 2 disordered regions span residues 201–223 and 238–261; these read QEERQRGKDKDGDGDGAGGAPEE and QKSDQGVEGPGATGGGGSSPNDPV. In terms of domain architecture, NR LBD spans 221–454; the sequence is PEEMPVDRIL…TFLMEMLEAP (234 aa). Over residues 245 to 255 the composition is skewed to gly residues; that stretch reads EGPGATGGGGS.

The protein belongs to the nuclear hormone receptor family. NR2 subfamily. As to quaternary structure, homodimer (in vitro). Heterodimer with other retinoic acid receptor family members. Binds DNA preferentially as a RAR/RXR heterodimer. Interacts with NR1H3. Interacts with AKAP13. As to expression, expressed in the adrenal gland with main expression in the zona fasciculata (at protein level).

It is found in the nucleus. Its subcellular location is the cytoplasm. Its function is as follows. Receptor for retinoic acid. Retinoic acid receptors bind as heterodimers to their target response elements in response to their ligands, all-trans or 9-cis retinoic acid, and regulate gene expression in various biological processes. The RAR/RXR heterodimers bind to the retinoic acid response elements (RARE). The protein is Retinoic acid receptor RXR-beta (Rxrb) of Rattus norvegicus (Rat).